Reading from the N-terminus, the 180-residue chain is Large ribosomal subunit protein uL5 (180 aa).

This sequence belongs to the universal ribosomal protein uL5 family. As to quaternary structure, part of the 50S ribosomal subunit; part of the 5S rRNA/L5/L18/L25 subcomplex. Contacts the 5S rRNA and the P site tRNA. Forms a bridge to the 30S subunit in the 70S ribosome.

Functionally, this is one of the proteins that bind and probably mediate the attachment of the 5S RNA into the large ribosomal subunit, where it forms part of the central protuberance. In the 70S ribosome it contacts protein S13 of the 30S subunit (bridge B1b), connecting the 2 subunits; this bridge is implicated in subunit movement. Contacts the P site tRNA; the 5S rRNA and some of its associated proteins might help stabilize positioning of ribosome-bound tRNAs. The chain is Large ribosomal subunit protein uL5 from Solibacter usitatus (strain Ellin6076).